We begin with the raw amino-acid sequence, 716 residues long: Fusoxypene synthase (716 aa).

Positions leucine 4–threonine 328 are sesterterpenoid synthase. Position 96 (aspartate 96) interacts with Mg(2+). Aspartate 96 provides a ligand contact to substrate. The segment at arginine 187–asparagine 190 is substrate. Asparagine 231 is a substrate binding site. Residues serine 235–glutamate 239 are substrate. The geranylfarnesyl diphosphate synthase stretch occupies residues tryptophan 329 to cysteine 711. Residues lysine 422, arginine 425, and histidine 454 each coordinate isopentenyl diphosphate. Mg(2+) contacts are provided by aspartate 461 and aspartate 465. Dimethylallyl diphosphate is bound at residue arginine 470. Arginine 471 contacts isopentenyl diphosphate. Dimethylallyl diphosphate-binding residues include lysine 548, threonine 549, glutamine 587, asparagine 594, and lysine 602.

This sequence in the N-terminal section; belongs to the terpene synthase family. In the C-terminal section; belongs to the FPP/GGPP synthase family.

It catalyses the reaction 4 isopentenyl diphosphate + dimethylallyl diphosphate = (2E,6E,10E,14E)-geranylfarnesyl diphosphate + 4 diphosphate. It carries out the reaction (2E,6E,10E,14E)-geranylfarnesyl diphosphate = fusoxypene A + diphosphate. The enzyme catalyses (2E,6E,10E,14E)-geranylfarnesyl diphosphate = fusoxypene B + diphosphate. The catalysed reaction is (2E,6E,10E,14E)-geranylfarnesyl diphosphate = fusoxypene C + diphosphate. It catalyses the reaction (2E,6E,10E,14E)-geranylfarnesyl diphosphate = (-)-astellatene + diphosphate. Functionally, bifunctional sesterterpenoid synthase that performs both prenyl transferase and terpene cyclase activity, converting isopentenyl diphosphate and dimethylallyl diphosphate into geranylfarnesyl diphosphate (GFPP) and then converting GFPP into the enantiomeric sesterterpenes with a 5-6-7-3-5 ring system fusoxypene A, fusoxypene B, fusoxypene C and (-)-astellatene. The chain is Fusoxypene synthase from Fusarium oxysporum (Fusarium vascular wilt).